The primary structure comprises 53 residues: Rubredoxin (53 aa).

One can recognise a Rubredoxin-like domain in the interval 1–53; the sequence is MTKYVCTVCGYVYDPEVGDPDNNINPGTSFQDIPEDWVCPLCGVGKDQFEEEA. The Fe cation site is built by C6, C9, C39, and C42.

Belongs to the rubredoxin family. The cofactor is Fe(3+).

Functionally, rubredoxin is a small nonheme, iron protein lacking acid-labile sulfide. Its single Fe, chelated to 4 Cys, functions as an electron acceptor and may also stabilize the conformation of the molecule. This Acetoanaerobium sticklandii (strain ATCC 12662 / DSM 519 / JCM 1433 / CCUG 9281 / NCIMB 10654 / HF) (Clostridium sticklandii) protein is Rubredoxin.